The following is a 308-amino-acid chain: Eukaryotic translation initiation factor 3 subunit G-B (308 aa).

Disordered regions lie at residues 1 to 35 and 176 to 227; these read MPTG…KQDP and STAD…DDNA. Over residues 185-194 the composition is skewed to low complexity; that stretch reads GAEPEPAQAP. A compositionally biased stretch (basic and acidic residues) spans 209–227; sequence GGSRRGESMQPNRRADDNA. One can recognise an RRM domain in the interval 227 to 305; the sequence is ATIRVTNLSE…LILNVEWAKP (79 aa).

It belongs to the eIF-3 subunit G family. Component of the eukaryotic translation initiation factor 3 (eIF-3) complex, which is composed of 13 subunits: eif3a, eif3b, eif3c, eif3d, eif3e, eif3f, eif3g, eif3h, eif3i, eif3j, eif3k, eif3l and eif3m.

The protein resides in the cytoplasm. Its function is as follows. RNA-binding component of the eukaryotic translation initiation factor 3 (eIF-3) complex, which is involved in protein synthesis of a specialized repertoire of mRNAs and, together with other initiation factors, stimulates binding of mRNA and methionyl-tRNAi to the 40S ribosome. The eIF-3 complex specifically targets and initiates translation of a subset of mRNAs involved in cell proliferation. This subunit can bind 18S rRNA. The chain is Eukaryotic translation initiation factor 3 subunit G-B (eif3g-b) from Xenopus laevis (African clawed frog).